Reading from the N-terminus, the 266-residue chain is Dihydropteroate synthase (266 aa).

One can recognise a Pterin-binding domain in the interval 12–260; sequence AAIMGILNVT…DVKANQDIVA (249 aa). Position 19 (N19) interacts with Mg(2+). Residues T59, D93, N112, D176, K212, and 248 to 250 contribute to the (7,8-dihydropterin-6-yl)methyl diphosphate site; that span reads RVH.

Belongs to the DHPS family. Homodimer or homotrimer. The cofactor is Mg(2+).

The catalysed reaction is (7,8-dihydropterin-6-yl)methyl diphosphate + 4-aminobenzoate = 7,8-dihydropteroate + diphosphate. It participates in cofactor biosynthesis; tetrahydrofolate biosynthesis; 7,8-dihydrofolate from 2-amino-4-hydroxy-6-hydroxymethyl-7,8-dihydropteridine diphosphate and 4-aminobenzoate: step 1/2. In terms of biological role, catalyzes the condensation of para-aminobenzoate (pABA) with 6-hydroxymethyl-7,8-dihydropterin diphosphate (DHPt-PP) to form 7,8-dihydropteroate (H2Pte), the immediate precursor of folate derivatives. In Streptococcus pyogenes serotype M1, this protein is Dihydropteroate synthase (folP).